The following is a 162-amino-acid chain: tRNA-specific adenosine deaminase (162 aa).

The 113-residue stretch at 3 to 115 folds into the CMP/dCMP-type deaminase domain; it reads DSDKYFMKCA…KNLQKYICCK (113 aa). Residue H54 participates in Zn(2+) binding. E56 serves as the catalytic Proton donor. Zn(2+) is bound by residues C84 and C87.

It belongs to the cytidine and deoxycytidylate deaminase family. As to quaternary structure, homodimer. The cofactor is Zn(2+).

The enzyme catalyses adenosine(34) in tRNA + H2O + H(+) = inosine(34) in tRNA + NH4(+). In terms of biological role, catalyzes the deamination of adenosine to inosine at the wobble position 34 of tRNA(Arg2). This Buchnera aphidicola subsp. Baizongia pistaciae (strain Bp) protein is tRNA-specific adenosine deaminase.